The sequence spans 506 residues: Maturase K (506 aa).

It belongs to the intron maturase 2 family. MatK subfamily.

The protein localises to the plastid. The protein resides in the chloroplast. In terms of biological role, usually encoded in the trnK tRNA gene intron. Probably assists in splicing its own and other chloroplast group II introns. In Uncarina grandidieri (Mouse trap tree), this protein is Maturase K.